The sequence spans 936 residues: ABC transporter A family member 5 (936 aa).

A run of 7 helical transmembrane segments spans residues 34-54, 340-360, 393-413, 422-442, 454-474, 484-501, and 527-547; these read LIVI…LFDT, ASLI…PVML, FLAI…AIGL, SIQF…AFLV, VAAY…FQFL, WIYI…RGLY, and AMEE…IAAY. In terms of domain architecture, ABC transporter spans 614–851; the sequence is IVCDNLKKVY…YGGSYVLTMT (238 aa). 652-659 lines the ATP pocket; that stretch reads GPNGAGKT.

It belongs to the ABC transporter superfamily. ABCA family. CPR flippase (TC 3.A.1.211) subfamily.

Its subcellular location is the membrane. The sequence is that of ABC transporter A family member 5 (ABCA5) from Arabidopsis thaliana (Mouse-ear cress).